The chain runs to 337 residues: Glucokinase (337 aa).

Residue 11–16 (ADIGGT) coordinates ATP.

It belongs to the bacterial glucokinase family.

It is found in the cytoplasm. The enzyme catalyses D-glucose + ATP = D-glucose 6-phosphate + ADP + H(+). This chain is Glucokinase, found in Xylella fastidiosa (strain 9a5c).